The chain runs to 235 residues: Large ribosomal subunit protein uL1 (235 aa).

It belongs to the universal ribosomal protein uL1 family. Part of the 50S ribosomal subunit.

Binds directly to 23S rRNA. The L1 stalk is quite mobile in the ribosome, and is involved in E site tRNA release. Its function is as follows. Protein L1 is also a translational repressor protein, it controls the translation of the L11 operon by binding to its mRNA. The polypeptide is Large ribosomal subunit protein uL1 (Methylibium petroleiphilum (strain ATCC BAA-1232 / LMG 22953 / PM1)).